The following is a 135-amino-acid chain: D-ribose pyranase (135 aa).

His-20 functions as the Proton donor in the catalytic mechanism. Substrate-binding positions include Asp-28, His-102, and 124–126; that span reads YSN.

Belongs to the RbsD / FucU family. RbsD subfamily. As to quaternary structure, homodecamer.

The protein resides in the cytoplasm. The enzyme catalyses beta-D-ribopyranose = beta-D-ribofuranose. The protein operates within carbohydrate metabolism; D-ribose degradation; D-ribose 5-phosphate from beta-D-ribopyranose: step 1/2. In terms of biological role, catalyzes the interconversion of beta-pyran and beta-furan forms of D-ribose. The chain is D-ribose pyranase from Thermotoga maritima (strain ATCC 43589 / DSM 3109 / JCM 10099 / NBRC 100826 / MSB8).